The primary structure comprises 188 residues: HTH-type transcriptional repressor AcnR (188 aa).

Positions 10–70 (VNSRQEILEG…ALAREDAARM (61 aa)) constitute an HTH tetR-type domain. Residues 33-52 (TVRRLEEATGKSRGAIFHHF) constitute a DNA-binding region (H-T-H motif). Residues 79–80 (LV), arginine 130, and asparagine 134 contribute to the citrate site. Position 181 (glutamate 181) interacts with Mg(2+). Position 185 (arginine 185) interacts with citrate.

As to quaternary structure, homodimer.

Functionally, acnR negatively controls the expression of the aconitase gene acn. The chain is HTH-type transcriptional repressor AcnR from Corynebacterium efficiens (strain DSM 44549 / YS-314 / AJ 12310 / JCM 11189 / NBRC 100395).